The primary structure comprises 308 residues: MSRGPWHVAVLMGGWSAEREVSLMSGKGVADALESRGHKVTRIDMDRDVALRLAEAKPDVVFNALHGVPGEDGTVQGMLDLMGFRYTHSGLVTSVIAIDKELTKQALVPHGIPMPTGTMVDSESLFSVDPLPRPYVLKPVNEGSSVGVAIVRDDSNYGNPISRDALGPWQQFDRLLAEPFIKGRELTVAVLGDTALAVTELRVKSGFYDYDAKYTDGLTEHVCPADVPDDVAQRMKDLALQAHRLLGCKGASRSDFRWDDEHGLAGIFLLEVNTQPGMTPLSLVPEQARAVGMDYAELVERIVEEALT.

The 201-residue stretch at 104–304 (KQALVPHGIP…YAELVERIVE (201 aa)) folds into the ATP-grasp domain. Position 131-187 (131-187 (LPRPYVLKPVNEGSSVGVAIVRDDSNYGNPISRDALGPWQQFDRLLAEPFIKGRELT)) interacts with ATP. Asp-255, Glu-271, and Asn-273 together coordinate Mg(2+).

It belongs to the D-alanine--D-alanine ligase family. It depends on Mg(2+) as a cofactor. Requires Mn(2+) as cofactor.

Its subcellular location is the cytoplasm. It catalyses the reaction 2 D-alanine + ATP = D-alanyl-D-alanine + ADP + phosphate + H(+). It participates in cell wall biogenesis; peptidoglycan biosynthesis. Functionally, cell wall formation. In Sphingopyxis alaskensis (strain DSM 13593 / LMG 18877 / RB2256) (Sphingomonas alaskensis), this protein is D-alanine--D-alanine ligase.